The primary structure comprises 96 residues: Transcription and mRNA export factor SUS1 (96 aa).

Belongs to the ENY2 family. In terms of assembly, component of the nuclear pore complex (NPC)-associated TREX-2 complex (transcription and export complex 2), composed of at least SUS1, SAC3, THP1, SEM1, and CDC31. TREX-2 contains 2 SUS1 chains. The TREX-2 complex interacts with the nucleoporin NUP1. Component of the 1.8 MDa SAGA transcription coactivator-HAT complex. SAGA is built of 5 distinct domains with specialized functions. Within the SAGA complex, SUS1, SGF11, SGF73 and UBP8 form an additional subcomplex of SAGA called the DUB module (deubiquitination module). Interacts directly with THP1, SAC3, SGF11, and with the RNA polymerase II.

The protein resides in the nucleus. It localises to the nucleoplasm. The protein localises to the cytoplasm. Its subcellular location is the P-body. Its function is as follows. Involved in mRNA export coupled transcription activation by association with both the TREX-2 and the SAGA complexes. At the promoters, SAGA is required for recruitment of the basal transcription machinery. It influences RNA polymerase II transcriptional activity through different activities such as TBP interaction and promoter selectivity, interaction with transcription activators, and chromatin modification through histone acetylation and deubiquitination. Within the SAGA complex, participates in a subcomplex required for deubiquitination of H2B and for the maintenance of steady-state H3 methylation levels. The TREX-2 complex functions in docking export-competent ribonucleoprotein particles (mRNPs) to the nuclear entrance of the nuclear pore complex (nuclear basket). TREX-2 participates in mRNA export and accurate chromatin positioning in the nucleus by tethering genes to the nuclear periphery. May also be involved in cytoplasmic mRNA decay by interaction with components of P-bodies. The protein is Transcription and mRNA export factor SUS1 of Kluyveromyces lactis (strain ATCC 8585 / CBS 2359 / DSM 70799 / NBRC 1267 / NRRL Y-1140 / WM37) (Yeast).